The sequence spans 573 residues: Putative adenine deaminase PTO1085 (573 aa).

The protein belongs to the metallo-dependent hydrolases superfamily. Adenine deaminase family.

It catalyses the reaction adenine + H2O + H(+) = hypoxanthine + NH4(+). This Picrophilus torridus (strain ATCC 700027 / DSM 9790 / JCM 10055 / NBRC 100828 / KAW 2/3) protein is Putative adenine deaminase PTO1085.